The primary structure comprises 183 residues: ATP-dependent protease subunit HslV (183 aa).

Thr-10 is an active-site residue. Residues Ala-164, Cys-167, and Thr-170 each coordinate Na(+).

This sequence belongs to the peptidase T1B family. HslV subfamily. As to quaternary structure, a double ring-shaped homohexamer of HslV is capped on each side by a ring-shaped HslU homohexamer. The assembly of the HslU/HslV complex is dependent on binding of ATP.

The protein localises to the cytoplasm. It carries out the reaction ATP-dependent cleavage of peptide bonds with broad specificity.. Allosterically activated by HslU binding. Its function is as follows. Protease subunit of a proteasome-like degradation complex believed to be a general protein degrading machinery. This Rhizorhabdus wittichii (strain DSM 6014 / CCUG 31198 / JCM 15750 / NBRC 105917 / EY 4224 / RW1) (Sphingomonas wittichii) protein is ATP-dependent protease subunit HslV.